Consider the following 1004-residue polypeptide: Bifunctional glutamine synthetase adenylyltransferase/adenylyl-removing enzyme (1004 aa).

An adenylyl removase region spans residues 1–497 (MCCTTVVVVR…LHAKLFYQPL (497 aa)). The interval 502-1004 (GPASLEIRHG…KTFVRKVFGS (503 aa)) is adenylyl transferase.

Belongs to the GlnE family. Mg(2+) is required as a cofactor.

The catalysed reaction is [glutamine synthetase]-O(4)-(5'-adenylyl)-L-tyrosine + phosphate = [glutamine synthetase]-L-tyrosine + ADP. The enzyme catalyses [glutamine synthetase]-L-tyrosine + ATP = [glutamine synthetase]-O(4)-(5'-adenylyl)-L-tyrosine + diphosphate. Involved in the regulation of glutamine synthetase GlnA, a key enzyme in the process to assimilate ammonia. When cellular nitrogen levels are high, the C-terminal adenylyl transferase (AT) inactivates GlnA by covalent transfer of an adenylyl group from ATP to specific tyrosine residue of GlnA, thus reducing its activity. Conversely, when nitrogen levels are low, the N-terminal adenylyl removase (AR) activates GlnA by removing the adenylyl group by phosphorolysis, increasing its activity. The regulatory region of GlnE binds the signal transduction protein PII (GlnB) which indicates the nitrogen status of the cell. This chain is Bifunctional glutamine synthetase adenylyltransferase/adenylyl-removing enzyme, found in Mycobacterium leprae (strain TN).